The chain runs to 68 residues: Gallinacin-10 (68 aa).

The N-terminal stretch at 1–19 is a signal peptide; it reads MKILCLLFAVLLFLFQAAP. Positions 20-25 are excised as a propeptide; it reads GSADPL. 3 disulfides stabilise this stretch: Cys-32–Cys-61, Cys-39–Cys-54, and Cys-44–Cys-62.

This sequence belongs to the beta-defensin family. As to expression, strong expression in the testis, liver, gall bladder and kidney. Also expressed in the ovary and male and female reproductive tracts. Expressed in the ovarian stroma and the theca and granulosa layers of the ovarian follicle.

It localises to the secreted. It is found in the cytoplasmic granule. Has bactericidal activity. This chain is Gallinacin-10 (GAL10), found in Gallus gallus (Chicken).